Reading from the N-terminus, the 1375-residue chain is BNI1-related protein 1 (1375 aa).

Residues 94-490 enclose the GBD/FH3 domain; the sequence is CMPQDASLVE…YLIDSFQVST (397 aa). The stretch at 520 to 601 forms a coiled coil; sequence QSDEIARRAV…ITTHQRLYDQ (82 aa). Residue Ser-621 is modified to Phosphoserine. The FH1 domain maps to 659 to 851; the sequence is SSYLTDANNE…LVTPPAPPLP (193 aa). The disordered stretch occupies residues 661–684; sequence YLTDANNENESQNESEDKSKDSLF. At Ser-751 the chain carries Phosphoserine. Disordered regions lie at residues 764-785, 817-839, and 1285-1309; these read KLPQ…QSLL, AVPP…GPSN, and KSLL…GEKV. 2 stretches are compositionally biased toward pro residues: residues 767 to 781 and 818 to 828; these read QLPP…PPLP and VPPPPPPPPLP. Residues 868 to 1290 enclose the FH2 domain; that stretch reads DLKPPPTEKR…YEQRKSLLDM (423 aa). Positions 1302–1336 constitute a DAD domain; sequence DENDGEKVNRDAVDLLISKLREVKKDPEPLRRRKS.

Belongs to the formin homology family. BNI1 subfamily. In terms of assembly, interacts with profilin at the FH1 domain.

Functionally, may organize microtubules by mediating spindle positioning and movement in the budding process. Potential target of the RHO family members. The chain is BNI1-related protein 1 (BNR1) from Saccharomyces cerevisiae (strain ATCC 204508 / S288c) (Baker's yeast).